A 230-amino-acid chain; its full sequence is Ion-translocating oxidoreductase complex subunit E (230 aa).

The Cytoplasmic portion of the chain corresponds to 1–17 (MSENRTLMLNGMWNNNP). 2 consecutive transmembrane segments (helical) span residues 18–38 (ALVQ…VTNA) and 39–59 (LGLG…VSLV). Residues 60 to 68 (RDYVPKEVR) are Cytoplasmic-facing. A helical membrane pass occupies residues 69–89 (IPVFVMIIASLVTCVQLLMNA). At 90–92 (YAY) the chain is on the periplasmic side. A helical transmembrane segment spans residues 93 to 113 (GLYLSLGIFIPLIVTNCIIIG). At 114–123 (RAEAFASKND) the chain is on the cytoplasmic side. A helical transmembrane segment spans residues 124-144 (VLPAALDGFWMGLGMTSVLVV). The Periplasmic segment spans residues 145-181 (LGSLREIIGNGTLFDGADLLLGEWAKVLRIEVFHFDS). Residues 182–202 (AFLLALLPPGAFIGVGFLIAA) traverse the membrane as a helical segment. Over 203–230 (KSVIDKQIAARQPKQQKQAIERARVTNV) the chain is Cytoplasmic.

This sequence belongs to the NqrDE/RnfAE family. As to quaternary structure, the complex is composed of six subunits: RnfA, RnfB, RnfC, RnfD, RnfE and RnfG.

It is found in the cell inner membrane. Its function is as follows. Part of a membrane-bound complex that couples electron transfer with translocation of ions across the membrane. The polypeptide is Ion-translocating oxidoreductase complex subunit E (Vibrio cholerae serotype O1 (strain ATCC 39541 / Classical Ogawa 395 / O395)).